Consider the following 182-residue polypeptide: Large ribosomal subunit protein uL5 (182 aa).

It belongs to the universal ribosomal protein uL5 family. Part of the 50S ribosomal subunit; part of the 5S rRNA/L5/L18/L25 subcomplex. Contacts the 5S rRNA and the P site tRNA. Forms a bridge to the 30S subunit in the 70S ribosome.

This is one of the proteins that bind and probably mediate the attachment of the 5S RNA into the large ribosomal subunit, where it forms part of the central protuberance. In the 70S ribosome it contacts protein S13 of the 30S subunit (bridge B1b), connecting the 2 subunits; this bridge is implicated in subunit movement. Contacts the P site tRNA; the 5S rRNA and some of its associated proteins might help stabilize positioning of ribosome-bound tRNAs. This Trichormus variabilis (strain ATCC 29413 / PCC 7937) (Anabaena variabilis) protein is Large ribosomal subunit protein uL5.